We begin with the raw amino-acid sequence, 172 residues long: Trypsin inhibitor 1B (172 aa).

Cystine bridges form between Cys40–Cys84 and Cys133–Cys139.

The protein belongs to the protease inhibitor I3 (leguminous Kunitz-type inhibitor) family.

WTI-1B inhibits trypsin stoichiometrically. The sequence is that of Trypsin inhibitor 1B from Psophocarpus tetragonolobus (Winged bean).